Reading from the N-terminus, the 351-residue chain is Phenylalanine--tRNA ligase alpha subunit (351 aa).

Position 276 (Glu-276) interacts with Mg(2+).

This sequence belongs to the class-II aminoacyl-tRNA synthetase family. Phe-tRNA synthetase alpha subunit type 1 subfamily. In terms of assembly, tetramer of two alpha and two beta subunits. The cofactor is Mg(2+).

The protein localises to the cytoplasm. It catalyses the reaction tRNA(Phe) + L-phenylalanine + ATP = L-phenylalanyl-tRNA(Phe) + AMP + diphosphate + H(+). The polypeptide is Phenylalanine--tRNA ligase alpha subunit (Psychrobacter arcticus (strain DSM 17307 / VKM B-2377 / 273-4)).